Reading from the N-terminus, the 473-residue chain is 1-deoxy-D-xylulose 5-phosphate reductoisomerase, chloroplastic (473 aa).

The transit peptide at 1–49 (MALKVVSFPGDLAAVSFLDSNRGGAFNQLKVDLPFQTRDRRAVSLRRTC) directs the protein to the chloroplast. Residues Thr85, Gly86, Ser87, Ile88, Gly111, Asn113, and Asn199 each contribute to the NADPH site. Lys200 is a binding site for 1-deoxy-D-xylulose 5-phosphate. Position 201 (Glu201) interacts with NADPH. Position 225 (Asp225) interacts with Mn(2+). Ser226, Glu227, Ser251, and His274 together coordinate 1-deoxy-D-xylulose 5-phosphate. Glu227 contributes to the Mn(2+) binding site. Gly280 provides a ligand contact to NADPH. Residues Ser287, Asn292, Lys293, and Glu296 each contribute to the 1-deoxy-D-xylulose 5-phosphate site. Mn(2+) is bound at residue Glu296.

It belongs to the DXR family. Requires Mn(2+) as cofactor. Mg(2+) is required as a cofactor.

Its subcellular location is the plastid. It is found in the chloroplast stroma. The enzyme catalyses 2-C-methyl-D-erythritol 4-phosphate + NADP(+) = 1-deoxy-D-xylulose 5-phosphate + NADPH + H(+). It functions in the pathway isoprenoid biosynthesis; isopentenyl diphosphate biosynthesis via DXP pathway; isopentenyl diphosphate from 1-deoxy-D-xylulose 5-phosphate: step 1/6. In terms of biological role, enzyme of the plastid non-mevalonate pathway for isoprenoid biosynthesis that catalyzes the NADPH-dependent rearrangement and reduction of 1-deoxy-D-xylulose-5-phosphate (DXP) to 2-C-methyl-D-erythritol 4-phosphate (MEP). Required for chloroplast development. The sequence is that of 1-deoxy-D-xylulose 5-phosphate reductoisomerase, chloroplastic (DXR) from Oryza sativa subsp. japonica (Rice).